A 517-amino-acid polypeptide reads, in one-letter code: Phenol 2-monooxygenase, oxygenase component DmpN (517 aa).

Glu109, Glu139, His142, Glu200, Glu234, and His237 together coordinate Fe cation.

The protein belongs to the TmoA/XamoA family. As to quaternary structure, the multicomponent enzyme phenol hydroxylase is formed by DmpL (P1 component), DmpM (P2 component), DmpN (P3 component), DmpO (P4 component) and DmpP (P5 component). The oxygenase component is a dimer composed of three subunits, DmpL, DmpN and DmpO (DmpLNO). DmpN interacts with the auxiliary protein DmpK (P0 component). It depends on Fe(2+) as a cofactor.

It carries out the reaction phenol + NADH + O2 + H(+) = catechol + NAD(+) + H2O. The protein operates within aromatic compound metabolism; phenol degradation. With respect to regulation, requires DmpM for efficient turnover. The activity of DmpLNO oxygenase is inhibited by dithiothreitol (DTT) by a mechanism apparently involving H(2)O(2) generation. Its function is as follows. Part of a multicomponent enzyme which catalyzes the degradation of phenol and some of its methylated derivatives. DmpL, DmpN and DmpO form the oxygenase component of the complex. Required for growth on phenol and for in vitro phenol hydroxylase activity. The protein is Phenol 2-monooxygenase, oxygenase component DmpN of Pseudomonas sp. (strain CF600).